The chain runs to 202 residues: Putative transmembrane protein ORF202 (202 aa).

5 consecutive transmembrane segments (helical) span residues 13–33 (AIAF…FHYI), 40–60 (VFYL…LFLG), 87–107 (YYPV…ISVF), 156–176 (YGAL…HSLS), and 177–197 (LTAF…DLWA).

The protein resides in the host membrane. This Acidianus filamentous virus 2 (isolate Italy/Pozzuoli) (AFV-2) protein is Putative transmembrane protein ORF202.